Here is a 226-residue protein sequence, read N- to C-terminus: Prolactin (226 aa).

Positions 1–29 are cleaved as a signal peptide; that stretch reads MNSQGSAQKAGTLLLLLISNLLFCQNVQP. Cysteines 33 and 38 form a disulfide. Phosphoserine is present on residues serine 53 and serine 117. 2 cysteine pairs are disulfide-bonded: cysteine 85–cysteine 201 and cysteine 218–cysteine 226.

This sequence belongs to the somatotropin/prolactin family. As to quaternary structure, interacts with PRLR.

It localises to the secreted. Prolactin acts primarily on the mammary gland by promoting lactation. In Mus musculus (Mouse), this protein is Prolactin (Prl).